Consider the following 451-residue polypeptide: Chromosomal replication initiator protein DnaA (451 aa).

The domain I, interacts with DnaA modulators stretch occupies residues 1 to 73; sequence MQDNLPQIWE…SNALKQTTSK (73 aa). The segment at 73–113 is domain II; the sequence is KNFEIRFIVPSEEKISKTEESQKKLEGSVNISVASDQFVSN. Residues 114-330 are domain III, AAA+ region; it reads NLNPKYTFDT…GALIRIVAYS (217 aa). The ATP site is built by glycine 158, glycine 160, lysine 161, and threonine 162. Residues 331–451 form a domain IV, binds dsDNA region; sequence SLTNSEITVE…ERIAKEIKGD (121 aa).

Belongs to the DnaA family. Oligomerizes as a right-handed, spiral filament on DNA at oriC.

The protein resides in the cytoplasm. Functionally, plays an essential role in the initiation and regulation of chromosomal replication. ATP-DnaA binds to the origin of replication (oriC) to initiate formation of the DNA replication initiation complex once per cell cycle. Binds the DnaA box (a 9 base pair repeat at the origin) and separates the double-stranded (ds)DNA. Forms a right-handed helical filament on oriC DNA; dsDNA binds to the exterior of the filament while single-stranded (ss)DNA is stabiized in the filament's interior. The ATP-DnaA-oriC complex binds and stabilizes one strand of the AT-rich DNA unwinding element (DUE), permitting loading of DNA polymerase. After initiation quickly degrades to an ADP-DnaA complex that is not apt for DNA replication. Binds acidic phospholipids. In Alkaliphilus oremlandii (strain OhILAs) (Clostridium oremlandii (strain OhILAs)), this protein is Chromosomal replication initiator protein DnaA.